Reading from the N-terminus, the 264-residue chain is Thymidylate synthase (264 aa).

R21 contributes to the dUMP binding site. Position 51 (H51) interacts with (6R)-5,10-methylene-5,6,7,8-tetrahydrofolate. Residue 126–127 participates in dUMP binding; sequence RR. C146 (nucleophile) is an active-site residue. Residues 166-169, N177, and 207-209 contribute to the dUMP site; these read RSVD and HLY. Residue D169 coordinates (6R)-5,10-methylene-5,6,7,8-tetrahydrofolate. S263 is a binding site for (6R)-5,10-methylene-5,6,7,8-tetrahydrofolate.

The protein belongs to the thymidylate synthase family. Bacterial-type ThyA subfamily. Homodimer.

The protein localises to the cytoplasm. The catalysed reaction is dUMP + (6R)-5,10-methylene-5,6,7,8-tetrahydrofolate = 7,8-dihydrofolate + dTMP. It functions in the pathway pyrimidine metabolism; dTTP biosynthesis. In terms of biological role, catalyzes the reductive methylation of 2'-deoxyuridine-5'-monophosphate (dUMP) to 2'-deoxythymidine-5'-monophosphate (dTMP) while utilizing 5,10-methylenetetrahydrofolate (mTHF) as the methyl donor and reductant in the reaction, yielding dihydrofolate (DHF) as a by-product. This enzymatic reaction provides an intracellular de novo source of dTMP, an essential precursor for DNA biosynthesis. The polypeptide is Thymidylate synthase (Anoxybacillus flavithermus (strain DSM 21510 / WK1)).